A 334-amino-acid chain; its full sequence is Phosphoribosylformylglycinamidine cyclo-ligase (334 aa).

Belongs to the AIR synthase family.

The protein resides in the cytoplasm. The catalysed reaction is 2-formamido-N(1)-(5-O-phospho-beta-D-ribosyl)acetamidine + ATP = 5-amino-1-(5-phospho-beta-D-ribosyl)imidazole + ADP + phosphate + H(+). It participates in purine metabolism; IMP biosynthesis via de novo pathway; 5-amino-1-(5-phospho-D-ribosyl)imidazole from N(2)-formyl-N(1)-(5-phospho-D-ribosyl)glycinamide: step 2/2. The protein is Phosphoribosylformylglycinamidine cyclo-ligase of Pyrococcus abyssi (strain GE5 / Orsay).